The sequence spans 579 residues: MVQEELWAAFSGPSGVALACCLVAAALALRWSSRRMARGAAARARQRQQAALETMDKAAQRFRLQNPDLDSEMLLALPLPQLVQKVRSGELSPEAVLFSYLQKAWEVNRGTNCVTTYLADCEAQLCQAPGQGLLYGVPVSLKECFSCKGHDSTLGLSRNQGTPAECDCVVVQVLKLQGAVPFVHTNVPQSMFSYDCSNPLFGQTTNPWMSSKSPGGSSGGEGALIAAGGSPLGLGTDIGGSIRFPSAFCGICGIKPTGNRISKSGLKGSVYGQVAVQLSVGPMARDVESLALCLRALLCEDMFRLDPTVPPLPFNEEVYASSRPLRVGYYETDNYTMPTPAMRRALLETKRSLEAAGHTLIPFLPANIPHALEALSTGGLFSDGGKRLLQNFEGDYVDSCLGDLISILRLPKWLKGLLAFMLRPLLPRLAGFLSSLRPRSAGKLWELQHEIEMYRHSVIAQWRALDLDVVLTPMLSPALDLNAPGKATGAVSYTLLYNCLDFPAGVVPVTTVTAEDEAQMEHYKGYFGDIWDKVVQKAMKRSVGLPVAVQCVALPWQEELCLRFMREVERLMAPGRQPS.

A helical transmembrane segment spans residues 9–29; the sequence is AFSGPSGVALACCLVAAALAL. The Cytoplasmic segment spans residues 30 to 403; that stretch reads RWSSRRMARG…GDYVDSCLGD (374 aa). Catalysis depends on lysine 142, which acts as the Charge relay system. Substrate contacts are provided by residues methionine 191, serine 217, and 238 to 241; that span reads IGGS. Serine 217 serves as the catalytic Charge relay system. Serine 241 functions as the Acyl-ester intermediate in the catalytic mechanism. At serine 241 the chain carries Phosphoserine. Residues 404–433 lie within the membrane without spanning it; it reads LISILRLPKWLKGLLAFMLRPLLPRLAGFL. Residues 434 to 579 lie on the Cytoplasmic side of the membrane; the sequence is SSLRPRSAGK…RLMAPGRQPS (146 aa).

Belongs to the amidase family. Homodimer.

Its subcellular location is the endoplasmic reticulum membrane. It localises to the golgi apparatus membrane. It carries out the reaction N-(5Z,8Z,11Z,14Z-eicosatetraenoyl)-ethanolamine + H2O = ethanolamine + (5Z,8Z,11Z,14Z)-eicosatetraenoate. It catalyses the reaction (9Z)-octadecenamide + H2O = (9Z)-octadecenoate + NH4(+). The catalysed reaction is 2-(5Z,8Z,11Z,14Z-eicosatetraenoyl)-glycerol + H2O = glycerol + (5Z,8Z,11Z,14Z)-eicosatetraenoate + H(+). The enzyme catalyses 1-O-methyl-(5Z,8Z,11Z,14Z)-eicosatetraenoate + H2O = methanol + (5Z,8Z,11Z,14Z)-eicosatetraenoate + H(+). It carries out the reaction (9Z,12Z,15Z)-octadecatrienamide + H2O = (9Z,12Z,15Z)-octadecatrienoate + NH4(+). It catalyses the reaction (5Z,8Z,11Z,14Z)-eicosatetraenamide + H2O = (5Z,8Z,11Z,14Z)-eicosatetraenoate + NH4(+). The catalysed reaction is (6Z)-octadecenamide + H2O = (6Z)-octadecenoate + NH4(+). The enzyme catalyses (15Z)-tetracosenamide + H2O = (15Z)-tetracosenoate + NH4(+). It carries out the reaction (8Z,11Z,14Z)-eicosatrienamide + H2O = (8Z,11Z,14Z)-eicosatrienoate + NH4(+). It catalyses the reaction (11Z,14Z,17Z)-eicosatrienamide + H2O = (11Z,14Z,17Z)-eicosatrienoate + NH4(+). The catalysed reaction is (11Z,14Z)-eicosadienamide + H2O = (11Z,14Z)-eicosadienoate + NH4(+). The enzyme catalyses (9Z,12Z)-octadecadienamide + H2O = (9Z,12Z)-octadecadienoate + NH4(+). It carries out the reaction tetradecamide + H2O = tetradecanoate + NH4(+). It catalyses the reaction N-(9Z-octadecenoyl) ethanolamine + H2O = ethanolamine + (9Z)-octadecenoate. The catalysed reaction is N-(9Z-octadecenoyl)-taurine + H2O = taurine + (9Z)-octadecenoate. The enzyme catalyses (11Z)-eicosenamide + H2O = (11Z)-eicosenoate + NH4(+). It carries out the reaction N-(9Z-hexadecenoyl) ethanolamine + H2O = (9Z)-hexadecenoate + ethanolamine. It catalyses the reaction N-octadecanoyl ethanolamine + H2O = octadecanoate + ethanolamine. The catalysed reaction is N-docosanoyl-ethanolamine + H2O = docosanoate + ethanolamine. The enzyme catalyses N-tetracosanoyl-taurine + H2O = tetracosanoate + taurine. It carries out the reaction N-(15Z-tetracosenoyl)-ethanolamine + H2O = (15Z)-tetracosenoate + ethanolamine. It catalyses the reaction N-docosanoyl-taurine + H2O = docosanoate + taurine. The catalysed reaction is N-(15Z-tetracosenoyl)-taurine + H2O = (15Z)-tetracosenoate + taurine. The enzyme catalyses N-tricosanoyl-taurine + H2O = tricosanoate + taurine. It carries out the reaction (9Z)-octadecenoate + glycine = N-(9Z-octadecenoyl)glycine + H2O. It catalyses the reaction N-(5Z,8Z,11Z,14Z)-eicosatetraenoyl-glycine + H2O = (5Z,8Z,11Z,14Z)-eicosatetraenoate + glycine. The catalysed reaction is N-(5Z,8Z,11Z,14Z-eicosatetraenoyl)-L-serine + H2O = (5Z,8Z,11Z,14Z)-eicosatetraenoate + L-serine. With respect to regulation, inhibited by trifluoromethyl ketone. In terms of biological role, catalyzes the hydrolysis of endogenous amidated lipids like the sleep-inducing lipid oleamide ((9Z)-octadecenamide), the endocannabinoid anandamide (N-(5Z,8Z,11Z,14Z-eicosatetraenoyl)-ethanolamine), as well as other fatty amides, to their corresponding fatty acids, thereby regulating the signaling functions of these molecules. Also catalyzes the hydrolysis of the endocannabinoid 2-arachidonoylglycerol (2-(5Z,8Z,11Z,14Z-eicosatetraenoyl)-glycerol). FAAH cooperates with PM20D1 in the hydrolysis of amino acid-conjugated fatty acids such as N-fatty acyl glycine and N-fatty acyl-L-serine, thereby acting as a physiological regulator of specific subsets of intracellular, but not of extracellular, N-fatty acyl amino acids. The polypeptide is Fatty-acid amide hydrolase 1 (FAAH) (Sus scrofa (Pig)).